A 759-amino-acid chain; its full sequence is 1,4-alpha-glucan branching enzyme GlgB (759 aa).

The disordered stretch occupies residues 1–22 (MAKTKGLPKDTAVTPSPHLRPH). D422 (nucleophile) is an active-site residue. The active-site Proton donor is E475.

This sequence belongs to the glycosyl hydrolase 13 family. GlgB subfamily. In terms of assembly, monomer.

The enzyme catalyses Transfers a segment of a (1-&gt;4)-alpha-D-glucan chain to a primary hydroxy group in a similar glucan chain.. It functions in the pathway glycan biosynthesis; glycogen biosynthesis. Its function is as follows. Catalyzes the formation of the alpha-1,6-glucosidic linkages in glycogen by scission of a 1,4-alpha-linked oligosaccharide from growing alpha-1,4-glucan chains and the subsequent attachment of the oligosaccharide to the alpha-1,6 position. In Mycobacterium sp. (strain KMS), this protein is 1,4-alpha-glucan branching enzyme GlgB.